The chain runs to 2104 residues: MRWVPLVLLPLIASAATTYQHRQTYSSLQCRVNDPLSCNQAKSEVCVFVNGQYRCECPVGVSRLADGRCLVVNECARPSLNACHKDAQCVDLAEGYTCRCNSGFADTSPDKVNKPGRQCQKTTNECGAKQTYGVDCDENAACVDTPEGFQCVCQPGYADVSTSISKLPGRKCVESVNECTNGEADCSNNADCFDRADGYECKCRPGFVDASPNVDKYPGRVCNKPKAPEYYGQQSRQPQCSEGSGCGPNEECRFNTAGEKVCQCRRGSVQQSNGVCKVFSQCEQANECDRNAFCSNTYDGPKCQCKDGFLDVSPDPVRLPGRKCQQVRNECADGSHDCSHQAACQDTPTGYICSCNSNCIDVSSRYNLPPGRKCSVAANQCSDKSLNSCDENADCVQLPDGYTCKCFAGYVDVSSNANLPPGRVCTLSTACPAQPTDLVFLIDGSGSIGSYVFQTEVLRFLAEFTELFDIAPQKTRVSVVQYSDQIRHEFGLDNYSDRKSLQNAIRNIEYLTGLTRTGAAIEHVANEAFSERRGARPVGQVSRVAIVITDGRSQDNVTRPSDNARRQDIQLFAVGVTNHVLDAELEEISGSKDRTFHVSGFEDLNTRLRSAIQRVACPHQNNEDTYNKGPCDPSNHNGCDRSLNQVCQQKNGKFVCACPAGFDIHPVTKVCGGDICNPEIATSCPDPEICEKTPFGNWRCTCPADLGWRDRLTGVCKIGEKPVQTSESNDECSPNDVHSCPANSKCEKGAGGEFICKCDAGFQRNGRTNKCEAPGTCDPRMPDSCDARKKEKCLPDGRGAFACMCDRHHKRHPVTDICLIDECAAGVADCDPNAKCTDTDESYICTCNEGFLDKSPEQNKKPGRVCSKQRNECLDGTHNCSMNADCIDLPDGFLCRCKEDFVDISPNPNAFGGIDCRALVNECLITGGHNCHEHAICIDTRDSYKCQCKEGYVDHDELRNPGRTCKKLNQICESGKHECDKNARCVEKGANDYECVCNAGFIDKSPLTHRPGRKCVEPICSDDSKHDCHSAAICEENDSVPEKYTCKCRDGYLDVGAVMGGGKSGRECKELVNECLSASLNSCDAAATCIDLDDGYTCKCPLGSKDESPVPKLPGRSCKGLVNECNIPHLNNCSHFATCIDLEEGYECKCKPEYHDQKPEQPGTECKFIINECLAENLNDCSPNAMCIDKIDGYDCKCKAPFQDEMPSNPGRICRFDECADPKDNDCDKHALCIDTDDSYTCQCKEGFFDEISDPKKPGRVCIGLVIEPQNQSEDPTTPDPNTIKCGNGLCHLDLGEVCVGGATCSCRPGESRDNEKEKCVPTTSIPLVVRVMEYDGEPIQYRTDYSKPDTQAHIEIVDAVKKSVGKIIGKTDVAPRFVTTDVNYITNPKVQNSEWDKGLLGNVSVHLAGKEEVDKCRFYEQFAEIVREMGGRVDRIKLSDDADLDPCKKEEEKKGIPCGNTFCSIELGEECIAGKICGCPKGQKRKDANSPCRAVESWNLPLYVIRDGHEKITYSPSLSNPLNDDHKDLVSRFESGVAQSYDKTPLKGAFVTAEVNEIENPESRKKSWDTGILYNFTSHFVKGSVAEPASVFTDLIDYIQKRNDFEVGKSKLFISPEQLNPFSNCYHSDCHPDAICKEVGKGYTCTCPDGFRDLNPSRPGRNCLSYRGVNECEKPELNECSPHARCIDLDYLYKCECIRPYVNSAVGDALPGSVCSIDYCQDVNYCPLNSTCVNVDEQARCDCKPGFVDLRKSGHLSEAGLGESICRRQSDIDECALGLHNCSAAAICIDKKIGYECQCQEGYEDGNPSQPGRICAASLCGLCNGHGDCIHDALSSNVTCACLDGYTGQFCETAPSNLPLILMTLLALLFLLLTLLCCLYMCARCRCFGARGRSEGSASGQEILGSDYYTIPRAKLARPLYGDEMGDDHAGALAAYLDDGASISSDGSIEEIERRVTTDVTTREVRTTTVRDDDGNIISQSQTISHGNPHETDTEQYGMISSDHYKTSASEAMDAAMSTSASGAAYNQSSGAMMSSASGHKSAYNQGYASDSEDSDAGHAVYDRTTRTNQSHDFEPGADPRTGTERSKREFVTTTKAEEVNYF.

Residues 1 to 15 form the signal peptide; the sequence is MRWVPLVLLPLIASA. Residues 16–1860 lie on the Extracellular side of the membrane; that stretch reads ATTYQHRQTY…FCETAPSNLP (1845 aa). 3 EGF-like domains span residues 71 to 110, 122 to 163, and 175 to 213; these read VVNECARPSLNACHKDAQCVDLAEGYTCRCNSGFADTSPD, TTNE…VSTS, and SVNECTNGEADCSNNADCFDRADGYECKCRPGFVDASPN. 6 disulfides stabilise this stretch: cysteine 75-cysteine 89, cysteine 83-cysteine 98, cysteine 126-cysteine 142, cysteine 136-cysteine 151, cysteine 179-cysteine 192, and cysteine 186-cysteine 201. The WR1 domain occupies 220 to 265; it reads RVCNKPKAPEYYGQQSRQPQCSEGSGCGPNEECRFNTAGEKVCQCR. 3 consecutive EGF-like domains span residues 278-315, 327-360, and 377-416; these read VFSQCEQANECDRNAFCSNTYDGPKCQCKDGFLDVSPD, VRNECADGSHDCSHQAACQDTPTGYICSCNSNCI, and AANQCSDKSLNSCDENADCVQLPDGYTCKCFAGYVDVSSN. 7 disulfide bridges follow: cysteine 282–cysteine 294, cysteine 288–cysteine 303, cysteine 331–cysteine 344, cysteine 338–cysteine 353, cysteine 355–cysteine 359, cysteine 381–cysteine 395, and cysteine 389–cysteine 404. The VWFA domain occupies 437–612; sequence DLVFLIDGSG…DLNTRLRSAI (176 aa). N-linked (GlcNAc...) asparagine glycans are attached at residues asparagine 494 and asparagine 556. EGF-like domains follow at residues 728–772 and 819–857; these read SNDE…NKCE and LIDECAAGVADCDPNAKCTDTDESYICTCNEGFLDKSPE. Cystine bridges form between cysteine 732–cysteine 746, cysteine 740–cysteine 756, cysteine 758–cysteine 771, cysteine 823–cysteine 836, cysteine 830–cysteine 845, cysteine 873–cysteine 886, cysteine 880–cysteine 895, cysteine 923–cysteine 937, cysteine 931–cysteine 946, cysteine 972–cysteine 985, cysteine 979–cysteine 995, cysteine 1020–cysteine 1034, cysteine 1028–cysteine 1046, cysteine 1075–cysteine 1089, cysteine 1083–cysteine 1098, cysteine 1125–cysteine 1139, cysteine 1133–cysteine 1148, cysteine 1173–cysteine 1187, cysteine 1181–cysteine 1196, cysteine 1219–cysteine 1233, and cysteine 1227–cysteine 1242. The region spanning 869–907 is the EGF-like 9; calcium-binding domain; it reads QRNECLDGTHNCSMNADCIDLPDGFLCRCKEDFVDISPN. A glycan (N-linked (GlcNAc...) asparagine) is linked at asparagine 879. 7 consecutive EGF-like domains span residues 919–958, 968–1007, 1016–1058, 1071–1110, 1121–1160, 1169–1208, and 1215–1254; these read LVNECLITGGHNCHEHAICIDTRDSYKCQCKEGYVDHDEL, LNQICESGKHECDKNARCVEKGANDYECVCNAGFIDKSPL, VEPI…VGAV, LVNECLSASLNSCDAAATCIDLDDGYTCKCPLGSKDESPV, LVNECNIPHLNNCSHFATCIDLEEGYECKCKPEYHDQKPE, IINECLAENLNDCSPNAMCIDKIDGYDCKCKAPFQDEMPS, and RFDECADPKDNDCDKHALCIDTDDSYTCQCKEGFFDEISD. N-linked (GlcNAc...) asparagine glycosylation occurs at asparagine 1037. N-linked (GlcNAc...) asparagine glycosylation is present at asparagine 1132. Asparagine 1271, asparagine 1403, and asparagine 1576 each carry an N-linked (GlcNAc...) asparagine glycan. 2 consecutive SEA domains span residues 1322-1444 and 1495-1620; these read PTTS…DDAD and AVES…PEQL. EGF-like domains lie at 1622 to 1658, 1669 to 1705, and 1717 to 1754; these read PFSNCYHSDCHPDAICKEVGKGYTCTCPDGFRDLNPS, GVNECEKPELNECSPHARCIDLDYLYKCECIRPYVNS, and SIDYCQDVNYCPLNSTCVNVDEQARCDCKPGFVDLRKS. 11 disulfide bridges follow: cysteine 1626-cysteine 1637, cysteine 1631-cysteine 1646, cysteine 1673-cysteine 1687, cysteine 1681-cysteine 1696, cysteine 1721-cysteine 1733, cysteine 1727-cysteine 1742, cysteine 1776-cysteine 1789, cysteine 1783-cysteine 1798, cysteine 1821-cysteine 1830, cysteine 1824-cysteine 1841, and cysteine 1843-cysteine 1852. Residues asparagine 1730 and asparagine 1782 are each glycosylated (N-linked (GlcNAc...) asparagine). Residues 1772-1810 enclose the EGF-like 20; calcium-binding domain; the sequence is DIDECALGLHNCSAAAICIDKKIGYECQCQEGYEDGNPS. Positions 1817–1853 constitute an EGF-like 21 domain; sequence AASLCGLCNGHGDCIHDALSSNVTCACLDGYTGQFCE. Asparagine 1838 carries an N-linked (GlcNAc...) asparagine glycan. A helical transmembrane segment spans residues 1861 to 1881; the sequence is LILMTLLALLFLLLTLLCCLY. The Cytoplasmic segment spans residues 1882 to 2104; sequence MCARCRCFGA…TTKAEEVNYF (223 aa). Residues 2031-2040 show a composition bias toward low complexity; the sequence is SGAMMSSASG. The segment at 2031-2104 is disordered; sequence SGAMMSSASG…TTKAEEVNYF (74 aa). Composition is skewed to basic and acidic residues over residues 2062–2076 and 2083–2104; these read VYDRTTRTNQSHDFE and TGTERSKREFVTTTKAEEVNYF.

In terms of tissue distribution, abundant at hypodermal cell-matrix junctions overlying muscle of threefold embryos. Expression continues in body wall muscle in larvae and adults and is also detected in other regions where cells show mechanical attachment to the hypodermis including the inner surface of the pharynx, overlying anal and intestinal muscles, overlying vulval and uterine sex muscles, male tail muscle attachment zones and the six mechanosensory neurons (at protein level).

It localises to the cell junction. The protein localises to the hemidesmosome. It is found in the cytoplasm. Its subcellular location is the cytoskeleton. The protein resides in the cell membrane. Required for junctional attachments between hypodermis and muscle, and between the apical epithelial surface and the cuticular matrix. Essential for enclosure of the embryo by the hypodermis, hypodermal integrity, embryo elongation, and maintenance of hypodermal morphology in fully elongated embryos. In Caenorhabditis elegans, this protein is Transmembrane matrix receptor MUP-4.